The following is a 129-amino-acid chain: Lysozyme C-3 (129 aa).

Residues 1–129 (KVYERCELAA…VSRWIRGCRL (129 aa)) enclose the C-type lysozyme domain. 4 disulfide bridges follow: cysteine 6-cysteine 127, cysteine 30-cysteine 115, cysteine 64-cysteine 80, and cysteine 76-cysteine 94. Active-site residues include glutamate 35 and aspartate 52.

It belongs to the glycosyl hydrolase 22 family.

The protein resides in the secreted. The enzyme catalyses Hydrolysis of (1-&gt;4)-beta-linkages between N-acetylmuramic acid and N-acetyl-D-glucosamine residues in a peptidoglycan and between N-acetyl-D-glucosamine residues in chitodextrins.. Functionally, lysozymes have primarily a bacteriolytic function; those in tissues and body fluids are associated with the monocyte-macrophage system and enhance the activity of immunoagents. The chain is Lysozyme C-3 from Anas platyrhynchos (Mallard).